A 221-amino-acid polypeptide reads, in one-letter code: PKHD-type hydroxylase NATL1_16191 (221 aa).

Positions 80–174 (LIHGVMFTQS…RHVCVGWIQS (95 aa)) constitute a Fe2OG dioxygenase domain. Fe cation is bound by residues His-98, Asp-100, and His-155. Arg-165 serves as a coordination point for 2-oxoglutarate.

The cofactor is Fe(2+). L-ascorbate is required as a cofactor.

The sequence is that of PKHD-type hydroxylase NATL1_16191 from Prochlorococcus marinus (strain NATL1A).